The sequence spans 61 residues: Probable tautomerase SSP1389 (61 aa).

Pro2 functions as the Proton acceptor; via imino nitrogen in the catalytic mechanism.

This sequence belongs to the 4-oxalocrotonate tautomerase family.

This Staphylococcus saprophyticus subsp. saprophyticus (strain ATCC 15305 / DSM 20229 / NCIMB 8711 / NCTC 7292 / S-41) protein is Probable tautomerase SSP1389.